A 272-amino-acid chain; its full sequence is MRYIIILAVLFINSIHAKITSYKFESVNFDSKIEWTGDGLYNISLKNYGIKTWQTMYTNVPEGTYDISAFPKNDFVSFWVKFEQGDYKVEEYCTGLCVEVKIGPPTVTLTEYDDHINLYIEHPYATRGSKKIPIYKRGDMCDIYLLYTANFTFGDSKEPVPYDIDDYDCTSTGCSIDFVTTEKVCVTAQGATEGFLEKITPWSSKVCLTPKKSVYTCAIRSKEDVPNFKDKMARVIKRKFNKQSQSYLTKFLGSTSNDVTTFLSMLNLTKYS.

Positions 1-13 (MRYIIILAVLFIN) are cleaved as a signal peptide. 3 N-linked (GlcNAc...) asparagine; by host glycosylation sites follow: asparagine 42, asparagine 150, and asparagine 267.

It belongs to the type II cytokine receptor family. Homodimer. Interacts with host IFNG.

It is found in the secreted. Counteracts the antiviral effects of host IFN-gamma. Acts as a soluble IFN-gamma receptor and thus inhibits the interaction between host IFN-gamma and its receptor. The chain is Soluble interferon gamma receptor OPG193 (OPG193) from Bos taurus (Bovine).